We begin with the raw amino-acid sequence, 1045 residues long: MSDENDNGRPGSNPGGRAPITLKPRQGSVSAGVVKQSFSHGRTKTVVVETKRVRPHAPPAGNLAAPSSAERRQGDAPRQQSSSGGGGSSAGGLSQGEMLARQRAIEAAREHQERQAAERRAAEARAASEAAAARDAAAKSAAAAKAAAAPAPEAPAAPAPTPAPVAQAPAAPVVQAPVVAAPVQAPAAPVAAAPAAPRAEAPRPAPPPVRSDAPRPAPTAGQTRTYEPSRDRRDDRSSTTTYRPGPGAPPQGDRPQGDRPQGDRPFNQRAPRPDGPYNQRTPRPDAGGPPRGPRPEGAGGFRNDRPQGDRPQGDRPQGDRPQGDRPTQTVRYSALAPRPAPGARPGPGGPRGARPGVPASAPATPEIQRATRSAPRPGGDVGRKPEEDDDRRKAAAPGKAVSRAKGAPIRREGRLTIQTVAGDGDSADRMRSLASVRRAREREKEKRRGGPADVVKVAREVIIPDVITVQELSNRMAVRGVEIIKFLMRQGVMLKINDVIDNDTAELVATEFGHTVRRVSEADVEEGFIGAEDVDDHLEPRPPVVTVMGHVDHGKTSLLDALRKADVASGEHGGITQHIGAYQVRLESGQKVTFLDTPGHAAFSQMRARGANITDLVILVVAGDDGVMPQTVEAIKHARAAEVPIIVAVNKMDKPGADSTRVVNELLQHEIVVESLGGDTQIVEVSAKTGQGLDELIERILLLAEVMDLKANPDRTADGVVIEAKLDKGRGAVSTVLVKRGTLKRGDIVVAGSQFGRVRALLNERNEQLTEAGPATPVEILGLDGVPSPGDPFAVVENEARARELTEYRIRLKREKSMHPVGAGATSMADMMAKLQDKKYRELPLVIKADVQGSAEAIIGSLDAMSTDEVRARIILSGAGAISESDVMLAKGAGAPLIGFNVRASAQARALAEREGVEIRYYAIIYDLLDDIKGVLSGMLAPIQRETFLGNAEVLQAFDISKVGKVAGCRVTEGVVRKGAKVRIIRNDIVVLELGTLQTLKRFKDEVPEVPSGQECGMMFAGFQDIKVGDTIECFTVEEIKRQLD.

2 disordered regions span residues 1–169 (MSDE…AQAP) and 184–451 (QAPA…RGGP). Over residues 83-94 (SGGGGSSAGGLS) the composition is skewed to gly residues. Positions 103 to 123 (RAIEAAREHQERQAAERRAAE) are enriched in basic and acidic residues. Residues 124–151 (ARAASEAAAARDAAAKSAAAAKAAAAPA) show a composition bias toward low complexity. Over residues 152–163 (PEAPAAPAPTPA) the composition is skewed to pro residues. Residues 184 to 199 (QAPAAPVAAAPAAPRA) are compositionally biased toward low complexity. 2 stretches are compositionally biased toward basic and acidic residues: residues 227 to 237 (EPSRDRRDDRS) and 302 to 323 (RNDR…RPQG). A compositionally biased stretch (pro residues) spans 338-348 (RPAPGARPGPG). Positions 352-363 (GARPGVPASAPA) are enriched in low complexity. Composition is skewed to basic and acidic residues over residues 381-393 (VGRK…DRRK) and 438-450 (RARE…RRGG). Residues 540-710 (PRPPVVTVMG…LLLAEVMDLK (171 aa)) form the tr-type G domain. Residues 549–556 (GHVDHGKT) form a G1 region. Residue 549–556 (GHVDHGKT) participates in GTP binding. Residues 574 to 578 (GITQH) form a G2 region. The G3 stretch occupies residues 596 to 599 (DTPG). Residues 596–600 (DTPGH) and 650–653 (NKMD) each bind GTP. The G4 stretch occupies residues 650–653 (NKMD). The tract at residues 686–688 (SAK) is G5.

Belongs to the TRAFAC class translation factor GTPase superfamily. Classic translation factor GTPase family. IF-2 subfamily.

Its subcellular location is the cytoplasm. Functionally, one of the essential components for the initiation of protein synthesis. Protects formylmethionyl-tRNA from spontaneous hydrolysis and promotes its binding to the 30S ribosomal subunits. Also involved in the hydrolysis of GTP during the formation of the 70S ribosomal complex. In Caulobacter sp. (strain K31), this protein is Translation initiation factor IF-2.